We begin with the raw amino-acid sequence, 215 residues long: Cytochrome b6 (215 aa).

The chain crosses the membrane as a helical span at residues 32–52 (IFYCLGGITLTCFLVQVATGF). A heme c-binding site is contributed by C35. Residues H86 and H100 each contribute to the heme b site. Transmembrane regions (helical) follow at residues 90-110 (ASMM…TGGF), 116-136 (LTWV…VTGY), and 186-206 (LHTF…FPMI). Heme b-binding residues include H187 and H202.

It belongs to the cytochrome b family. PetB subfamily. In terms of assembly, the 4 large subunits of the cytochrome b6-f complex are cytochrome b6, subunit IV (17 kDa polypeptide, PetD), cytochrome f and the Rieske protein, while the 4 small subunits are PetG, PetL, PetM and PetN. The complex functions as a dimer. It depends on heme b as a cofactor. The cofactor is heme c.

Its subcellular location is the plastid. The protein resides in the chloroplast thylakoid membrane. In terms of biological role, component of the cytochrome b6-f complex, which mediates electron transfer between photosystem II (PSII) and photosystem I (PSI), cyclic electron flow around PSI, and state transitions. This is Cytochrome b6 from Helianthus annuus (Common sunflower).